Consider the following 130-residue polypeptide: Small ribosomal subunit protein uS11c (130 aa).

It belongs to the universal ribosomal protein uS11 family. As to quaternary structure, part of the 30S ribosomal subunit.

The protein resides in the plastid. The protein localises to the chloroplast. The protein is Small ribosomal subunit protein uS11c of Psilotum nudum (Whisk fern).